The chain runs to 348 residues: Alcohol dehydrogenase 2 (348 aa).

Zn(2+) contacts are provided by Cys44, His67, Cys98, Cys101, Cys104, Cys112, and Cys154. NAD(+) contacts are provided by residues 178 to 184 (GAAGGLG), Asp202, Lys207, 269 to 271 (VGL), and Arg341.

The protein belongs to the zinc-containing alcohol dehydrogenase family. In terms of assembly, homotetramer. Requires Zn(2+) as cofactor.

The protein localises to the cytoplasm. It carries out the reaction a primary alcohol + NAD(+) = an aldehyde + NADH + H(+). The enzyme catalyses a secondary alcohol + NAD(+) = a ketone + NADH + H(+). The sequence is that of Alcohol dehydrogenase 2 (ADH2) from Candida albicans (strain SC5314 / ATCC MYA-2876) (Yeast).